The chain runs to 779 residues: Vezatin (779 aa).

A run of 2 helical transmembrane segments spans residues 139–159 (LATP…LLVM) and 162–182 (TWWI…YLVI). The stretch at 430–462 (VRSLQLHLKALLNEVIILEDELEKLVCTKETQE) forms a coiled coil. Disordered stretches follow at residues 618-719 (PVDP…DSLQ) and 757-779 (EQTF…IEEK). The segment covering 625–634 (ISNSEPSMNS) has biased composition (polar residues). Positions 638-649 (KVSKNDTEEESN) are enriched in basic and acidic residues. A compositionally biased stretch (polar residues) spans 706–719 (GLTTAPPTPRDSLQ). The span at 770–779 (EENKNEIEEK) shows a compositional bias: basic and acidic residues.

Belongs to the vezatin family. In terms of assembly, interacts with USH2A (via the cytoplasmic region); the interaction associates VEZT with the USH2 complex at the stereocilia base. Interacts with myosin MYO7A and the cadherin-catenins complex.

Its subcellular location is the cell membrane. It is found in the cell projection. The protein localises to the stereocilium membrane. The protein resides in the cell junction. It localises to the adherens junction. Its subcellular location is the nucleus. It is found in the cytoplasmic vesicle. The protein localises to the secretory vesicle. The protein resides in the acrosome. In terms of biological role, plays a pivotal role in the establishment of adherens junctions and their maintenance in adult life. Required for morphogenesis of the preimplantation embryo, and for the implantation process. Its function is as follows. (Microbial infection) In case of Listeria infection, promotes bacterial internalization by participating in myosin VIIa recruitment to the entry site. The chain is Vezatin (VEZT) from Homo sapiens (Human).